The primary structure comprises 85 residues: Serine protease inhibitor Cvsi-2 (85 aa).

The first 18 residues, 1-18 (MKVAVVVALLCFVCYTAA), serve as a signal peptide directing secretion.

Contains 6 disulfide bonds. As to expression, detected in hemolymph (at protein level). Within the digestive gland expression is limited to the basophil cells of the digestive diverticula.

It is found in the secreted. In terms of biological role, slow-binding inhibitor of serine proteases. The inhibitor rapidly binds to the protease forming a weak enzyme-inhibitor complex, and this is followed by a slow isomerization forming a tight-binding enzyme-inhibitor complex. Active against subtilisin A with a dissociation constant of 0.18 nM. Active against perkinsin. Not active against thermolysin, papain or pepsin. This chain is Serine protease inhibitor Cvsi-2, found in Crassostrea virginica (Eastern oyster).